A 289-amino-acid chain; its full sequence is MKNILSIQSHVVFGHAGNSXAEFPXRRMGVNVWPLNTVQFSNHTQYPEKWTGCVMXAEHITEIVDGIAAIGKLAQCDAVLSGYLGSAEQGRRIVDIVKKVKQANPNAWYFCDPVMGHPEKGCIVPPEVSGVLCEDALPISDIIAPNLLELETLAGGATLHNVDQCVKAARQLCQQGPKIVLVKHLSRAGFRHDRFEMLLVTADHSWHVSRPLVDFGERQPVGVGDLTSGLMLVDLLKGVELKTALEHVAAAVYEVMLKTKEMNEYELQLVAAQDQMVHPTHNFCATQLD.

Residues S9 and T44–Q45 contribute to the substrate site. ATP contacts are provided by residues D112, A144, E149, K183, and R210 to V213. Residue D225 participates in substrate binding.

This sequence belongs to the pyridoxine kinase family. PdxY subfamily. As to quaternary structure, homodimer. Mg(2+) serves as cofactor.

The catalysed reaction is pyridoxal + ATP = pyridoxal 5'-phosphate + ADP + H(+). It functions in the pathway cofactor metabolism; pyridoxal 5'-phosphate salvage; pyridoxal 5'-phosphate from pyridoxal: step 1/1. Functionally, pyridoxal kinase involved in the salvage pathway of pyridoxal 5'-phosphate (PLP). Catalyzes the phosphorylation of pyridoxal to PLP. The polypeptide is Pyridoxal kinase PdxY (Proteus mirabilis).